Reading from the N-terminus, the 274-residue chain is uncharacterized protein (274 aa).

The first 21 residues, 1 to 21 (MRKLTLLPLLLIITGLLTVQA), serve as a signal peptide directing secretion. The chain crosses the membrane as a helical span at residues 249-266 (TSAFVILTASALIFIYLF).

It is found in the membrane. This is an uncharacterized protein from Archaeoglobus fulgidus (strain ATCC 49558 / DSM 4304 / JCM 9628 / NBRC 100126 / VC-16).